The chain runs to 209 residues: Imidazole glycerol phosphate synthase subunit HisH (209 aa).

The region spanning 1-205 (MIAIIDYGMG…KGVVEAWKSS (205 aa)) is the Glutamine amidotransferase type-1 domain. Cysteine 79 (nucleophile) is an active-site residue. Residues histidine 180 and glutamate 182 contribute to the active site.

As to quaternary structure, heterodimer of HisH and HisF.

The protein resides in the cytoplasm. The catalysed reaction is 5-[(5-phospho-1-deoxy-D-ribulos-1-ylimino)methylamino]-1-(5-phospho-beta-D-ribosyl)imidazole-4-carboxamide + L-glutamine = D-erythro-1-(imidazol-4-yl)glycerol 3-phosphate + 5-amino-1-(5-phospho-beta-D-ribosyl)imidazole-4-carboxamide + L-glutamate + H(+). It carries out the reaction L-glutamine + H2O = L-glutamate + NH4(+). The protein operates within amino-acid biosynthesis; L-histidine biosynthesis; L-histidine from 5-phospho-alpha-D-ribose 1-diphosphate: step 5/9. In terms of biological role, IGPS catalyzes the conversion of PRFAR and glutamine to IGP, AICAR and glutamate. The HisH subunit catalyzes the hydrolysis of glutamine to glutamate and ammonia as part of the synthesis of IGP and AICAR. The resulting ammonia molecule is channeled to the active site of HisF. This chain is Imidazole glycerol phosphate synthase subunit HisH, found in Bacillus mycoides (strain KBAB4) (Bacillus weihenstephanensis).